The primary structure comprises 579 residues: Aspartate--tRNA(Asp/Asn) ligase (579 aa).

An L-aspartate-binding site is contributed by Glu-169. The interval 193 to 196 (QLFK) is aspartate. Arg-215 contributes to the L-aspartate binding site. ATP-binding positions include 215–217 (RDE) and Gln-224. His-437 contributes to the L-aspartate binding site. Position 471 (Glu-471) interacts with ATP. An L-aspartate-binding site is contributed by Arg-478. 523-526 (GWDR) contributes to the ATP binding site. The tract at residues 551–579 (DPLTGAPTPITAEQRREAGVDAVPEQATS) is disordered.

It belongs to the class-II aminoacyl-tRNA synthetase family. Type 1 subfamily. In terms of assembly, homodimer.

Its subcellular location is the cytoplasm. The catalysed reaction is tRNA(Asx) + L-aspartate + ATP = L-aspartyl-tRNA(Asx) + AMP + diphosphate. Its function is as follows. Aspartyl-tRNA synthetase with relaxed tRNA specificity since it is able to aspartylate not only its cognate tRNA(Asp) but also tRNA(Asn). Reaction proceeds in two steps: L-aspartate is first activated by ATP to form Asp-AMP and then transferred to the acceptor end of tRNA(Asp/Asn). This chain is Aspartate--tRNA(Asp/Asn) ligase, found in Thermobifida fusca (strain YX).